A 682-amino-acid polypeptide reads, in one-letter code: 1,4-alpha-glucan-branching enzyme (682 aa).

(1,4-alpha-D-glucosyl)n is bound by residues Trp-88 and Lys-124. The Nucleophile role is filled by Asp-342. Glu-397 (proton donor) is an active-site residue.

This sequence belongs to the glycosyl hydrolase 13 family. GlgB subfamily.

Its subcellular location is the cytoplasm. The catalysed reaction is Transfers a segment of a (1-&gt;4)-alpha-D-glucan chain to a primary hydroxy group in a similar glucan chain.. Its pathway is glycan biosynthesis; glycogen biosynthesis. Its function is as follows. Glycogen-branching enzyme participates in the glycogen biosynthetic process along with glycogenin and glycogen synthase. Generates alpha-1,6-glucosidic branches from alpha-1,4-linked glucose chains, to increase solubility of the glycogen polymer. This chain is 1,4-alpha-glucan-branching enzyme, found in Cryptococcus neoformans var. grubii serotype A (strain H99 / ATCC 208821 / CBS 10515 / FGSC 9487) (Filobasidiella neoformans var. grubii).